A 360-amino-acid chain; its full sequence is WD repeat domain phosphoinositide-interacting protein 4 (360 aa).

WD repeat units lie at residues 1–34 (MTQQPLRGVTSLRFNQDQSCFCCAMETGVRIYNV), 40–84 (KGHL…IWDD), 92–128 (KEKLVLEFTFTKPVLSVRMRHDKIVIVLKNRIYVYSF), 133–174 (RKLF…LVDL), 183–222 (SAPFTINAHQSDIACVSLNQPGTVVASASQKGTLIRLFDT), 227–266 (KLVELRRGTDPATLYCINFSHDSSFLCASSDKGTVHIFAL), and 284–329 (GPMI…ICVD). The L/FRRG motif signature appears at 231–234 (LRRG).

This sequence belongs to the WD repeat PROPPIN family. Interacts with WIPI1. Interacts with WIPI2. Interacts with ATG2A and ATG2B. Interacts with ULK1. May interact with the PRKAA1, PRKAA2, PRKAB1 and PRKAG1 subunits of the AMPK kinase. May interact with NUDC. In terms of tissue distribution, ubiquitously expressed, with high expression in skeletal muscle and heart. Weakly expressed in liver and placenta. Expression is down-regulated in pancreatic and in kidney tumors.

It localises to the preautophagosomal structure. Its subcellular location is the cytoplasm. With respect to regulation, activated upon amino-acid starvation. Its function is as follows. Component of the autophagy machinery that controls the major intracellular degradation process by which cytoplasmic materials are packaged into autophagosomes and delivered to lysosomes for degradation. Binds phosphatidylinositol 3-phosphate (PtdIns3P). Activated by the STK11/AMPK signaling pathway upon starvation, WDR45 is involved in autophagosome assembly downstream of WIPI2, regulating the size of forming autophagosomes. Together with WIPI1, promotes ATG2 (ATG2A or ATG2B)-mediated lipid transfer by enhancing ATG2-association with phosphatidylinositol 3-monophosphate (PI3P)-containing membranes. Probably recruited to membranes through its PtdIns3P activity. The protein is WD repeat domain phosphoinositide-interacting protein 4 (WDR45) of Homo sapiens (Human).